The primary structure comprises 284 residues: Syntaxin-like protein psy1 (284 aa).

Residues 23 to 57 adopt a coiled-coil conformation; that stretch reads EEIDHIRDAIRQIEDNVGRIEMLHQQSLQEIDEAN. One can recognise a t-SNARE coiled-coil homology domain in the interval 181–243; sequence LREVQERHAD…GEGTQHMDRA (63 aa). Residues 260–280 traverse the membrane as a helical; Anchor for type IV membrane protein segment; sequence ICVVIICVIVAVLCGVLIPVL.

Belongs to the syntaxin family.

The protein resides in the cell membrane. Its subcellular location is the prospore membrane. The chain is Syntaxin-like protein psy1 (psy1) from Schizosaccharomyces pombe (strain 972 / ATCC 24843) (Fission yeast).